A 105-amino-acid chain; its full sequence is MRVKKDDLVEVISGKDKGKRGKVLKVLPRENKVVIQGVNIVKRHQRPIPQLREGGIIEREAPIYASKVMLVCPNCDKPTRVGMRFLDDGAKVRFCKKCGEIVDKA.

The protein belongs to the universal ribosomal protein uL24 family. As to quaternary structure, part of the 50S ribosomal subunit.

Functionally, one of two assembly initiator proteins, it binds directly to the 5'-end of the 23S rRNA, where it nucleates assembly of the 50S subunit. Its function is as follows. One of the proteins that surrounds the polypeptide exit tunnel on the outside of the subunit. The chain is Large ribosomal subunit protein uL24 from Pseudothermotoga lettingae (strain ATCC BAA-301 / DSM 14385 / NBRC 107922 / TMO) (Thermotoga lettingae).